The sequence spans 207 residues: Sodium/potassium-transporting ATPase subunit beta-1-interacting protein 1 (207 aa).

The next 3 membrane-spanning stretches (helical) occupy residues 2–22 (GRCD…VAAL), 35–55 (APIL…FGTV), and 62–82 (LILY…IICF). Asn100 carries an N-linked (GlcNAc...) asparagine glycan. A helical transmembrane segment spans residues 147-167 (VVSSALQVFLALFGFVYACYV).

Belongs to the NKAIN family. In terms of assembly, interacts with atp1b1 C-terminus.

Its subcellular location is the cell membrane. This is Sodium/potassium-transporting ATPase subunit beta-1-interacting protein 1 (nkain1) from Danio rerio (Zebrafish).